The sequence spans 142 residues: Hemoglobin subunit alpha-A (142 aa).

A Globin domain is found at 2-142 (VLSANDKSNV…VGTVLTAKYR (141 aa)). H59 contributes to the O2 binding site. H88 is a heme b binding site.

This sequence belongs to the globin family. In terms of assembly, heterotetramer of two alpha chains and two beta chains. As to expression, red blood cells.

Functionally, involved in oxygen transport from the lung to the various peripheral tissues. In Columba livia (Rock dove), this protein is Hemoglobin subunit alpha-A (HBAA).